We begin with the raw amino-acid sequence, 140 residues long: Large ribosomal subunit protein uL14 (140 aa).

Belongs to the universal ribosomal protein uL14 family. Component of the large ribosomal subunit.

The protein resides in the cytoplasm. In terms of biological role, component of the large ribosomal subunit. The ribosome is a large ribonucleoprotein complex responsible for the synthesis of proteins in the cell. The protein is Large ribosomal subunit protein uL14 (rpl23) of Ictalurus punctatus (Channel catfish).